A 105-amino-acid polypeptide reads, in one-letter code: Met repressor (105 aa).

This sequence belongs to the MetJ family. As to quaternary structure, homodimer.

It localises to the cytoplasm. In terms of biological role, this regulatory protein, when combined with SAM (S-adenosylmethionine) represses the expression of the methionine regulon and of enzymes involved in SAM synthesis. The polypeptide is Met repressor (Pectobacterium carotovorum subsp. carotovorum (strain PC1)).